The following is an 88-amino-acid chain: MGTARFLRAVLLLSVLLMVTFPALLSAEHHDGRVDICRLPSGSGDCLRFFEMWYFDGTTCTKFVYGGYGGNDNRFPTEKACMKRCAKA.

The signal sequence occupies residues 1 to 27; the sequence is MGTARFLRAVLLLSVLLMVTFPALLSA. The propeptide occupies 28–33; sequence EHHDGR. A BPTI/Kunitz inhibitor domain is found at 37 to 85; it reads CRLPSGSGDCLRFFEMWYFDGTTCTKFVYGGYGGNDNRFPTEKACMKRC. Disulfide bonds link cysteine 37–cysteine 85 and cysteine 60–cysteine 81.

It belongs to the venom Kunitz-type family. 03 (sub-Kunitz) subfamily. Expressed by the venom gland.

The protein resides in the secreted. In terms of biological role, serine protease inhibitor that inhibits trypsin at a molar ratio of 1:1. The sequence is that of Kunitz-type U15-theraphotoxin-Hhn1h from Cyriopagopus hainanus (Chinese bird spider).